Reading from the N-terminus, the 327-residue chain is MKAPVRVTVTGAAGQISYSLLFRIAAGDMLGKDQPVILQLLEITPALKALQGVAMELDDCAFPLLAGIVTTDDPSVAFKDSDYALLVGARPRGPGMERKDLLAANAAIFSVQGKAINDHASKNIKVLVVGNPANTNALIAQRNAPDISPRQFTAMTRLDHNRALSQLATKTGTSINNITKALIWGNHSSTQYPDLHNTLVDGKPALSLVDQAWYESDYIPTVQQRGAAIIAARGASSAASAANAAINHIRDWALGTPANDWVSMGVYSDGSYGIEKGLIYSFPCVCKNGDWEIVQGLDINEFSRAKMTATEKELQEERDAVKELLPA.

11–17 (GAAGQIS) contacts NAD(+). Residues Arg92 and Arg98 each contribute to the substrate site. NAD(+) is bound by residues Asn105, Gln112, and 129–131 (VGN). Substrate is bound by residues Asn131 and Arg162. His187 (proton acceptor) is an active-site residue.

The protein belongs to the LDH/MDH superfamily. MDH type 2 family.

The enzyme catalyses (S)-malate + NAD(+) = oxaloacetate + NADH + H(+). Functionally, catalyzes the reversible oxidation of malate to oxaloacetate. The polypeptide is Malate dehydrogenase (Cellvibrio japonicus (strain Ueda107) (Pseudomonas fluorescens subsp. cellulosa)).